The chain runs to 438 residues: UDP-N-acetylglucosamine 1-carboxyvinyltransferase (438 aa).

35-36 provides a ligand contact to phosphoenolpyruvate; the sequence is KN. Residue arginine 105 coordinates UDP-N-acetyl-alpha-D-glucosamine. The Proton donor role is filled by cysteine 129. At cysteine 129 the chain carries 2-(S-cysteinyl)pyruvic acid O-phosphothioketal. Residues 134–138, aspartate 321, and valine 343 contribute to the UDP-N-acetyl-alpha-D-glucosamine site; that span reads RPVDL.

This sequence belongs to the EPSP synthase family. MurA subfamily.

The protein localises to the cytoplasm. It catalyses the reaction phosphoenolpyruvate + UDP-N-acetyl-alpha-D-glucosamine = UDP-N-acetyl-3-O-(1-carboxyvinyl)-alpha-D-glucosamine + phosphate. It participates in cell wall biogenesis; peptidoglycan biosynthesis. Its function is as follows. Cell wall formation. Adds enolpyruvyl to UDP-N-acetylglucosamine. The chain is UDP-N-acetylglucosamine 1-carboxyvinyltransferase from Synechocystis sp. (strain ATCC 27184 / PCC 6803 / Kazusa).